A 148-amino-acid chain; its full sequence is Deoxyuridine 5'-triphosphate nucleotidohydrolase (148 aa).

Substrate-binding positions include 67 to 69, Asn-80, 84 to 86, and Lys-94; these read RSG and TID.

This sequence belongs to the dUTPase family. Mg(2+) serves as cofactor.

The enzyme catalyses dUTP + H2O = dUMP + diphosphate + H(+). Its pathway is pyrimidine metabolism; dUMP biosynthesis; dUMP from dCTP (dUTP route): step 2/2. This enzyme is involved in nucleotide metabolism: it produces dUMP, the immediate precursor of thymidine nucleotides and it decreases the intracellular concentration of dUTP so that uracil cannot be incorporated into DNA. This is Deoxyuridine 5'-triphosphate nucleotidohydrolase from Orientia tsutsugamushi (strain Ikeda) (Rickettsia tsutsugamushi).